The primary structure comprises 210 residues: MTLAKDIASHLLKIQAVYLKPEEPFTWASGIKSPIYTDNRVTLAYPETRTLIENGFVEAIKEAFPEVEVIAGTATAGIPHGAIIADKMDLPFAYIRSKPKDHGAGNQIEGRVAQGQKMVVVEDLISTGGSVLEAVAAAKREGADVLGVVAIFSYQLPKADKNFADAGVKLVTLSNYSELIHLAQEEGYITPEGLDLLKRFKEDQENWQEG.

5-phospho-alpha-D-ribose 1-diphosphate contacts are provided by residues Arg-96, Lys-100, His-102, and 122–130; that span reads EDLISTGGS. Ser-126 serves as a coordination point for orotate.

This sequence belongs to the purine/pyrimidine phosphoribosyltransferase family. PyrE subfamily. As to quaternary structure, homodimer. Mg(2+) is required as a cofactor.

The enzyme catalyses orotidine 5'-phosphate + diphosphate = orotate + 5-phospho-alpha-D-ribose 1-diphosphate. The protein operates within pyrimidine metabolism; UMP biosynthesis via de novo pathway; UMP from orotate: step 1/2. Catalyzes the transfer of a ribosyl phosphate group from 5-phosphoribose 1-diphosphate to orotate, leading to the formation of orotidine monophosphate (OMP). This is Orotate phosphoribosyltransferase from Streptococcus pneumoniae serotype 4 (strain ATCC BAA-334 / TIGR4).